A 296-amino-acid chain; its full sequence is Meiotically up-regulated gene 2 protein (296 aa).

The protein belongs to the UPF0612 family.

Its subcellular location is the cytoplasm. The protein localises to the nucleus. Has a role in meiosis. This is Meiotically up-regulated gene 2 protein (mug2) from Schizosaccharomyces pombe (strain 972 / ATCC 24843) (Fission yeast).